A 678-amino-acid chain; its full sequence is uncharacterized protein (678 aa).

2 consecutive transmembrane segments (helical) span residues 14-34 and 180-200; these read LMFA…WTGL and GAVI…IGGF.

This sequence belongs to the mycobacterial PPE family.

The protein resides in the cell membrane. This is an uncharacterized protein from Mycobacterium tuberculosis (strain ATCC 25618 / H37Rv).